Consider the following 175-residue polypeptide: PE-PGRS family protein PE_PGRS8 (175 aa).

The 93-residue stretch at 1-93 folds into the PE domain; the sequence is MSFVIAAPEA…AGSYAAAEAA (93 aa).

This sequence belongs to the mycobacterial PE family. PGRS subfamily.

It is found in the secreted. Its subcellular location is the cell wall. The protein localises to the cell surface. The protein is PE-PGRS family protein PE_PGRS8 of Mycobacterium tuberculosis (strain ATCC 25618 / H37Rv).